The chain runs to 141 residues: Hemoglobin subunit alpha-D (141 aa).

In terms of domain architecture, Globin spans 1–141 (MLTAEDKKLI…VAAVLAGKYR (141 aa)). Heme b is bound by residues His58 and His87.

The protein belongs to the globin family. In terms of assembly, heterotetramer of two alpha-D chains and two beta chains. In terms of tissue distribution, red blood cells.

Its function is as follows. Involved in oxygen transport from the lung to the various peripheral tissues. The chain is Hemoglobin subunit alpha-D (HBAD) from Coturnix japonica (Japanese quail).